Here is a 50-residue protein sequence, read N- to C-terminus: Inducible serine protease inhibitor 1 (50 aa).

The disordered stretch occupies residues 1 to 27 (DLVXGTNFXKNNPXSTRVAANSXRSPS). Residues 8 to 25 (FXKNNPXSTRVAANSXRS) show a composition bias toward polar residues.

Inhibits trypsin and the toxin protease PR2 of M.anisopliae. Does not inhibit chymotrypsin, subtilisin Carlsberg, proteinase K, porcine pancreatic elastase and the toxin protease PR1 of M.anisopliae. This Galleria mellonella (Greater wax moth) protein is Inducible serine protease inhibitor 1.